Reading from the N-terminus, the 324-residue chain is Olfactory receptor 51D1 (324 aa).

Over M1 to F38 the chain is Extracellular. A helical membrane pass occupies residues W39–V59. Residues L60–R67 are Cytoplasmic-facing. The helical transmembrane segment at L68–S88 threads the bilayer. Topologically, residues I89 to A112 are extracellular. A disulfide bridge connects residues C110 and C202. A helical transmembrane segment spans residues Q113–F133. The Cytoplasmic segment spans residues D134 to C152. Residues T153 to P173 traverse the membrane as a helical segment. Residues F174 to V209 are Extracellular-facing. The helical transmembrane segment at V210 to S230 threads the bilayer. Residues Y231 to A250 are Cytoplasmic-facing. The helical transmembrane segment at F251–L271 threads the bilayer. The Extracellular portion of the chain corresponds to S272 to H285. Residues V286–A306 form a helical membrane-spanning segment. Topologically, residues K307 to K324 are cytoplasmic.

This sequence belongs to the G-protein coupled receptor 1 family.

The protein resides in the cell membrane. Odorant receptor. This is Olfactory receptor 51D1 (OR51D1) from Homo sapiens (Human).